A 293-amino-acid chain; its full sequence is 4-diphosphocytidyl-2-C-methyl-D-erythritol kinase (293 aa).

K16 is a catalytic residue. Residue 99–109 participates in ATP binding; that stretch reads PMGAGLGGGSS. D141 is an active-site residue.

This sequence belongs to the GHMP kinase family. IspE subfamily.

It catalyses the reaction 4-CDP-2-C-methyl-D-erythritol + ATP = 4-CDP-2-C-methyl-D-erythritol 2-phosphate + ADP + H(+). The protein operates within isoprenoid biosynthesis; isopentenyl diphosphate biosynthesis via DXP pathway; isopentenyl diphosphate from 1-deoxy-D-xylulose 5-phosphate: step 3/6. Functionally, catalyzes the phosphorylation of the position 2 hydroxy group of 4-diphosphocytidyl-2C-methyl-D-erythritol. The sequence is that of 4-diphosphocytidyl-2-C-methyl-D-erythritol kinase from Paraburkholderia xenovorans (strain LB400).